The chain runs to 285 residues: Transmembrane protein 53-B (285 aa).

Residues 165–185 traverse the membrane as a helical segment; the sequence is FLALAAFAIMVIILRIVLYPV.

The protein belongs to the TMEM53 family.

It localises to the nucleus outer membrane. Its function is as follows. Ensures normal bone formation, through the negative regulation of bone morphogenetic protein (BMP) signaling in osteoblast lineage cells by blocking cytoplasm-nucleus translocation of phosphorylated SMAD proteins. The chain is Transmembrane protein 53-B (tmem53-b) from Xenopus laevis (African clawed frog).